We begin with the raw amino-acid sequence, 50 residues long: Small, acid-soluble spore protein P (50 aa).

Residues 1–50 (MSKRKMGPKQQKNPELPKSPEQPYGEPLSGSKKEKKANHSGQKHNPHHGL) are disordered. Over residues 33 to 50 (KEKKANHSGQKHNPHHGL) the composition is skewed to basic residues.

Belongs to the SspP family.

The protein localises to the spore core. This chain is Small, acid-soluble spore protein P, found in Oceanobacillus iheyensis (strain DSM 14371 / CIP 107618 / JCM 11309 / KCTC 3954 / HTE831).